The sequence spans 648 residues: MEKKVEYIKENDKIVLMCNYGFRDMTLNLLKCFEKLSIDKSRYILYCMDDKAYQFFAEFKGIECQRFSRDDIINSSTSSTQLFHDNNTNDNKGIYSENAESYGDIGFRAICNEKPLVVLDVLKKGYNVLWTDTDIVWKRDPFIHFYQDINQENQFTNDDDIDLYVQQDDDDICAGFYFIRSNQRTIKFIQDSINFLNPCIDDQIAMRLFLKSQGINIKSKNILLSLSENDKKDKIRYRLLDKKLFPNGTNYFNLKITQRDNITPFIIHNNCIIGHRSKKDRFIEYGLWYINDDEIDINSNINNDDENNKEIKLFKNVLKNHTDIITSINSSDDGKLFTTSIDKSIKIWKFENTSGNDTDNGIFKVLKSKYIHKRGGIWSTFIFSSNNNNNNDYGFENLLTSSHDKTIQYWDNNLQVIQTFIGHTGIINQLIVIPNSSYFFTCSDDNTIRQFDLNNINFKRVFIGHNGWVSSIAINKNLNTLYSCSNDGTIRFWDINSGRCLNIIKGNQGGWIRKIIYNDNLNQLISGGNDGTIKIWSCDNLNNFNDNQYLLKINTNENSSINDLQFDSDTNLIYCAFENGSLKSFKLTSNNNNNNNNNNNNNNNTINYSLDKVYQGHLNSSINCIHISKSLNLLFSGGFDKQIKSWDL.

WD repeat units lie at residues Asn320–Thr358, His372–Phe420, Gly422–Val461, Gly464–Lys505, Asn507–Asp546, Asn556–Asn595, and His617–Leu648.

Belongs to the glycosyltransferase 77 family. The cofactor is Mn(2+).

The protein localises to the cytoplasm. The catalysed reaction is an alpha-L-fucosyl-(1-&gt;2)-beta-D-galactosyl derivative + UDP-alpha-D-galactose = an alpha-D-galactosyl-(1-&gt;3)-[alpha-L-fucosyl-(1-&gt;2)]-beta-D-galactosyl derivative + UDP + H(+). It functions in the pathway protein modification; protein glycosylation. Stimulated by dithiothreitol (DTT) in vitro. Totally inhibited by EDTA. Its function is as follows. Specifically catalyzes the transfer of a galactosyl residue to the hydroxyproline-linked saccharide on Skp1 protein (fpaA/fpaB). Catalyzes the formation of a Gal-alpha-1,3-Fuc linkage, leading to Gal-Fuc-Gal-GlcNAc-HyPro143-Skp1. This Dictyostelium discoideum (Social amoeba) protein is UDP-galactose:fucoside alpha-3-galactosyltransferase (agtA).